Here is a 207-residue protein sequence, read N- to C-terminus: Ribonuclease HII (207 aa).

One can recognise an RNase H type-2 domain in the interval 12 to 201; it reads DLVAGVDEVG…VRAAWEVREG (190 aa). Residues aspartate 18, glutamate 19, and aspartate 110 each coordinate a divalent metal cation.

Belongs to the RNase HII family. The cofactor is Mn(2+). Mg(2+) is required as a cofactor.

Its subcellular location is the cytoplasm. It catalyses the reaction Endonucleolytic cleavage to 5'-phosphomonoester.. In terms of biological role, endonuclease that specifically degrades the RNA of RNA-DNA hybrids. This is Ribonuclease HII from Pseudomonas putida (strain ATCC 700007 / DSM 6899 / JCM 31910 / BCRC 17059 / LMG 24140 / F1).